The primary structure comprises 614 residues: Laccase 1 (614 aa).

Residues 1–21 (MSRFARLLLMVVALFFTNAWA) form the signal peptide. 2 Plastocyanin-like domains span residues 30–143 (ITWK…IRPK) and 172–360 (YLVV…MRIP). A glycan (N-linked (GlcNAc...) asparagine) is linked at asparagine 75. Residues histidine 79, histidine 81, histidine 123, and histidine 125 each contribute to the Cu cation site. N-linked (GlcNAc...) asparagine glycosylation is found at asparagine 257, asparagine 280, asparagine 445, asparagine 469, and asparagine 485. Residues 469–599 (NATRDTENDG…GGMGIAILDG (131 aa)) enclose the Plastocyanin-like 3 domain. Positions 507, 510, and 512 each coordinate Cu cation. An N-linked (GlcNAc...) asparagine glycan is attached at asparagine 527. Cu cation contacts are provided by histidine 581, cysteine 582, histidine 583, and histidine 587.

The protein belongs to the multicopper oxidase family. Cu cation is required as a cofactor.

It is found in the cell surface. It functions in the pathway pigment biosynthesis. Functionally, laccase; part of the Pks1 gene cluster that mediates the biosynthesis of an anthraquinone derivative pigment that contributes to conidial pigmentation that provides protection from UV radiation, heat and cold stress. The polyketide synthase Pks1 produces 1-acetyl-2,4,6,8-tetrahydroxy-9,10-anthraquinone though condensation of acetyl-CoA with malonyl-CoA. The dehydratase EthD and the laccase Mlac1 further convert the anthraquinone derivative into the final conidial pigment. The chain is Laccase 1 from Metarhizium majus (strain ARSEF 297).